Reading from the N-terminus, the 319-residue chain is Acetyl-coenzyme A carboxylase carboxyl transferase subunit alpha (319 aa).

The 262-residue stretch at 35-296 folds into the CoA carboxyltransferase C-terminal domain; sequence DLDKEIEQLE…KDMLVKQLEE (262 aa).

This sequence belongs to the AccA family. In terms of assembly, acetyl-CoA carboxylase is a heterohexamer composed of biotin carboxyl carrier protein (AccB), biotin carboxylase (AccC) and two subunits each of ACCase subunit alpha (AccA) and ACCase subunit beta (AccD).

The protein localises to the cytoplasm. The enzyme catalyses N(6)-carboxybiotinyl-L-lysyl-[protein] + acetyl-CoA = N(6)-biotinyl-L-lysyl-[protein] + malonyl-CoA. It functions in the pathway lipid metabolism; malonyl-CoA biosynthesis; malonyl-CoA from acetyl-CoA: step 1/1. Functionally, component of the acetyl coenzyme A carboxylase (ACC) complex. First, biotin carboxylase catalyzes the carboxylation of biotin on its carrier protein (BCCP) and then the CO(2) group is transferred by the carboxyltransferase to acetyl-CoA to form malonyl-CoA. The protein is Acetyl-coenzyme A carboxylase carboxyl transferase subunit alpha of Vibrio atlanticus (strain LGP32) (Vibrio splendidus (strain Mel32)).